The sequence spans 370 residues: Homospermidine synthase 1 (370 aa).

Belongs to the deoxyhypusine synthase family. Homotetramer. It depends on NAD(+) as a cofactor. Post-translationally, the N-terminus is blocked. In terms of tissue distribution, expressed in roots.

It carries out the reaction putrescine + spermidine = sym-homospermidine + propane-1,3-diamine. Its pathway is alkaloid biosynthesis; pyrrolizidine alkaloid biosynthesis. Its function is as follows. Catalyzes the transfer of an aminobutyl unit from spermidine onto putrescine. The resulting polyamine homospermidine is a precursor in the biosynthesis of pyrrolizidine alkaloids. The sequence is that of Homospermidine synthase 1 (HSS1) from Senecio vernalis (Spring groundsel).